Consider the following 222-residue polypeptide: Charged multivesicular body protein 4a (222 aa).

2 disordered regions span residues 1 to 21 (MSGL…TPEE) and 177 to 222 (LLHV…EWVS). The interval 1-116 (MSGLGRLFGR…ELAAQGLKKA (116 aa)) is interaction with phosphoinosides. Residues 1-150 (MSGLGRLFGR…QISDAISRPV (150 aa)) are intramolecular interaction with C-terminus. Coiled-coil stretches lie at residues 20-105 (EEAI…VLRT) and 155-180 (DVDE…LLHV). The interval 151 to 222 (GFGDDVDEDE…ELKQLAEWVS (72 aa)) is intramolecular interaction with N-terminus. Ser196 is modified (phosphoserine).

The protein belongs to the SNF7 family. In terms of assembly, probable core component of the endosomal sorting required for transport complex III (ESCRT-III). ESCRT-III components are thought to multimerize to form a flat lattice on the perimeter membrane of the endosome. Several assembly forms of ESCRT-III may exist that interact and act sequentially. Self-associates; overexpression leads to the assembly of filaments that curve and associate to create circular rings. Interacts with CHMP2A. Interacts with CHMP3; the interaction requires the release of CHMP4A autoinhibition. Interacts with CHMP4B. Interacts with CHMP4C. Interacts with CHMP6. Interacts with VPS4A. Interacts with PDCD6IP; the interaction is direct.

The protein resides in the cytoplasmic vesicle membrane. The protein localises to the late endosome membrane. Its function is as follows. Probable core component of the endosomal sorting required for transport complex III (ESCRT-III) which is involved in multivesicular bodies (MVBs) formation and sorting of endosomal cargo proteins into MVBs. MVBs contain intraluminal vesicles (ILVs) that are generated by invagination and scission from the limiting membrane of the endosome and mostly are delivered to lysosomes enabling degradation of membrane proteins, such as stimulated growth factor receptors, lysosomal enzymes and lipids. The MVB pathway appears to require the sequential function of ESCRT-O, -I,-II and -III complexes. ESCRT-III proteins mostly dissociate from the invaginating membrane before the ILV is released. The ESCRT machinery also functions in topologically equivalent membrane fission events, such as the terminal stages of cytokinesis and the budding of enveloped viruses (lentiviruses). ESCRT-III proteins are believed to mediate the necessary vesicle extrusion and/or membrane fission activities, possibly in conjunction with the AAA ATPase VPS4. When overexpressed, membrane-assembled circular arrays of CHMP4A filaments can promote or stabilize negative curvature and outward budding. CHMP4A/B/C are required for the exosomal release of SDCBP, CD63 and syndecan. This is Charged multivesicular body protein 4a (CHMP4A) from Bos taurus (Bovine).